Reading from the N-terminus, the 177-residue chain is B-phycoerythrin beta chain (177 aa).

Positions 50 and 61 each coordinate phycourobilin. At asparagine 72 the chain carries N4-methylasparagine. 2 residues coordinate (2R,3E)-phycoerythrobilin: cysteine 82 and cysteine 158.

This sequence belongs to the phycobiliprotein family. In terms of assembly, heteromer of 6 alpha, 6 beta and one gamma chain. Post-translationally, contains two covalently linked phycoerythrobilin chromophores and one covalently linked phycourobilin chromophore.

Its subcellular location is the plastid. It is found in the chloroplast thylakoid membrane. Light-harvesting photosynthetic bile pigment-protein from the phycobiliprotein complex. In Porphyridium sordidum (Red alga), this protein is B-phycoerythrin beta chain (cpeB).